A 481-amino-acid chain; its full sequence is MQGFGSQIFRKLLRSSNAKVSDALLQNTRTLFTAPPLHSGLQTSFTAETQQHVRQNSQNLLKQLNDEMKARKYTETVATFSSLKPFGILDSQTINRYILFLVDRIKMLNGRGNVDEATLDKLDDILRYAIEHQEIASARFWRIMLQSYIDLNLFDKASLIADMSLSHMEFLPKDERVLGNLYISALQAKILGGASFEQCGKIGSAIHEQLEGKEVVNELVAVYLIYTVFKDQGISSKAHKALVQFNGLTSFHSDVIISVFVNKGLVDQAAAYLKNSNLNERNLPTIYTTVWLLQRLFEAHHSLDPLLTIFDYYLSVSPKDITRLTNAILSLSMKQFERDRDIKKATDFITTFINKMSDVKEFKPSISTANTLFSIASRLKDVKWLSAGFDMIDKYGLKPTHVTYRSLLKAYCLLPSTCEQISQAWVNLEYRLEAISISVADKEINLLKDCILSQPDRDDQQSCLQFLNMVLSKYGKHIRSP.

Residues 1 to 55 (MQGFGSQIFRKLLRSSNAKVSDALLQNTRTLFTAPPLHSGLQTSFTAETQQHVRQ) constitute a mitochondrion transit peptide. 2 PPR repeats span residues 137 to 172 (SARF…EFLP) and 365 to 399 (SIST…GLKP).

It localises to the mitochondrion. Its function is as follows. Mitochondrial RNA-binding protein involved in mitochondrial translation. The cox1 mRNA is one target but it is not clear if ppr8 has a single or multiple targets. The sequence is that of Pentatricopeptide repeat-containing protein 8, mitochondrial (ppr8) from Schizosaccharomyces pombe (strain 972 / ATCC 24843) (Fission yeast).